A 24-amino-acid polypeptide reads, in one-letter code: Humanin-like 10 (24 aa).

The protein belongs to the humanin family. As to expression, expressed in mature brain, thyroid gland and testis.

The protein resides in the secreted. It localises to the cytoplasm. In terms of biological role, plays a role as a neuroprotective and antiapoptotic factor. In Homo sapiens (Human), this protein is Humanin-like 10.